We begin with the raw amino-acid sequence, 417 residues long: Gamma-glutamyl phosphate reductase (417 aa).

It belongs to the gamma-glutamyl phosphate reductase family.

The protein resides in the cytoplasm. It carries out the reaction L-glutamate 5-semialdehyde + phosphate + NADP(+) = L-glutamyl 5-phosphate + NADPH + H(+). It participates in amino-acid biosynthesis; L-proline biosynthesis; L-glutamate 5-semialdehyde from L-glutamate: step 2/2. Functionally, catalyzes the NADPH-dependent reduction of L-glutamate 5-phosphate into L-glutamate 5-semialdehyde and phosphate. The product spontaneously undergoes cyclization to form 1-pyrroline-5-carboxylate. The sequence is that of Gamma-glutamyl phosphate reductase from Escherichia coli O6:H1 (strain CFT073 / ATCC 700928 / UPEC).